The primary structure comprises 329 residues: MQGSVTEFLKPRLVDIEQISPTHAKVTLEPLERGFGYTLGNALRRILLSSMPGCAVTEVEIDGVLHEYSSKEGVQEDVIEVLLNLKGLAVSVEGKDEATLTLNKSGAGPVTAGDFTHDGDVEIVNPEHVICHLTGDYELVMRVKVERGRGYVPAASRQSADDDERPIGRLLVDASFSPVERIAYSVDAARVEQRTDLDKLVIEMETNGTLDPEEAIRRAATILAEQLDAFVELRDISEPEEKEEKPEFDPILLRPVDDLELTVRSANCLKAEAIQYIGDLVQRTEVELLKTPNLGKKSLTEIKDVLASRGLSLGMRLENWPPASLIDND.

Positions 1 to 234 (MQGSVTEFLK…EQLDAFVELR (234 aa)) are alpha N-terminal domain (alpha-NTD). Residues 248 to 329 (FDPILLRPVD…WPPASLIDND (82 aa)) form an alpha C-terminal domain (alpha-CTD) region.

Belongs to the RNA polymerase alpha chain family. In terms of assembly, homodimer. The RNAP catalytic core consists of 2 alpha, 1 beta, 1 beta' and 1 omega subunit. When a sigma factor is associated with the core the holoenzyme is formed, which can initiate transcription.

The enzyme catalyses RNA(n) + a ribonucleoside 5'-triphosphate = RNA(n+1) + diphosphate. In terms of biological role, DNA-dependent RNA polymerase catalyzes the transcription of DNA into RNA using the four ribonucleoside triphosphates as substrates. In Idiomarina loihiensis (strain ATCC BAA-735 / DSM 15497 / L2-TR), this protein is DNA-directed RNA polymerase subunit alpha.